We begin with the raw amino-acid sequence, 303 residues long: Crk-like protein (303 aa).

One can recognise an SH2 domain in the interval 14-102 (WYMGPVSRQE…LDTTTLIEPA (89 aa)). The 61-residue stretch at 123–183 (ENLEYVRTLY…PVPYVEKLVR (61 aa)) folds into the SH3 1 domain. Tyr127 carries the post-translational modification Phosphotyrosine. The segment at 184–204 (SSPHGKHGNRNSNSYGIPEPA) is disordered. Tyr207 is subject to Phosphotyrosine. The region spanning 235-296 (NGPVFAKAIQ…PFTHVKIFDP (62 aa)) is the SH3 2 domain.

It belongs to the CRK family. In terms of assembly, interacts with INPP5D/SHIP1. Interacts with DOCK2 and EPOR. Interacts with phosphorylated CBLB and IRS4. Interacts with BCAR1/CAS and NEDD9/HEF1.

In terms of biological role, may mediate the transduction of intracellular signals. In Rattus norvegicus (Rat), this protein is Crk-like protein.